The chain runs to 275 residues: Thiazole synthase (275 aa).

Lysine 116 acts as the Schiff-base intermediate with DXP in catalysis. 1-deoxy-D-xylulose 5-phosphate-binding positions include glycine 177, 203–204, and 225–226; these read AG and NT.

Belongs to the ThiG family. As to quaternary structure, homotetramer. Forms heterodimers with either ThiH or ThiS.

Its subcellular location is the cytoplasm. It carries out the reaction [ThiS sulfur-carrier protein]-C-terminal-Gly-aminoethanethioate + 2-iminoacetate + 1-deoxy-D-xylulose 5-phosphate = [ThiS sulfur-carrier protein]-C-terminal Gly-Gly + 2-[(2R,5Z)-2-carboxy-4-methylthiazol-5(2H)-ylidene]ethyl phosphate + 2 H2O + H(+). It participates in cofactor biosynthesis; thiamine diphosphate biosynthesis. Functionally, catalyzes the rearrangement of 1-deoxy-D-xylulose 5-phosphate (DXP) to produce the thiazole phosphate moiety of thiamine. Sulfur is provided by the thiocarboxylate moiety of the carrier protein ThiS. In vitro, sulfur can be provided by H(2)S. This chain is Thiazole synthase, found in Acaryochloris marina (strain MBIC 11017).